We begin with the raw amino-acid sequence, 398 residues long: tRNA (guanine-N(7)-)-methyltransferase (398 aa).

S-adenosyl-L-methionine is bound by residues Glu124, Glu149, and Asp176. Asp232 contributes to the substrate binding site.

Belongs to the class I-like SAM-binding methyltransferase superfamily. TrmB family.

The catalysed reaction is guanosine(46) in tRNA + S-adenosyl-L-methionine = N(7)-methylguanosine(46) in tRNA + S-adenosyl-L-homocysteine. The protein operates within tRNA modification; N(7)-methylguanine-tRNA biosynthesis. Catalyzes the formation of N(7)-methylguanine at position 46 (m7G46) in tRNA. The polypeptide is tRNA (guanine-N(7)-)-methyltransferase (Helicobacter acinonychis (strain Sheeba)).